A 111-amino-acid chain; its full sequence is Colipase (111 aa).

Positions 1-16 (MKVLVLLLVTLAVVYA) are cleaved as a signal peptide. Residues 17–21 (APDPR) constitute a propeptide, enterostatin, activation peptide. Intrachain disulfides connect Cys-33–Cys-44, Cys-39–Cys-55, Cys-43–Cys-77, Cys-65–Cys-85, and Cys-79–Cys-103.

This sequence belongs to the colipase family. As to quaternary structure, forms a 1:1 stoichiometric complex with pancreatic lipase. As to expression, expressed by the pancreas.

The protein resides in the secreted. In terms of biological role, colipase is a cofactor of pancreatic lipase. It allows the lipase to anchor itself to the lipid-water interface. Without colipase the enzyme is washed off by bile salts, which have an inhibitory effect on the lipase. Enterostatin has a biological activity as a satiety signal. This chain is Colipase (CLPS), found in Ictidomys tridecemlineatus (Thirteen-lined ground squirrel).